We begin with the raw amino-acid sequence, 103 residues long: Large ribosomal subunit protein bL21 (103 aa).

The protein belongs to the bacterial ribosomal protein bL21 family. In terms of assembly, part of the 50S ribosomal subunit. Contacts protein L20.

Functionally, this protein binds to 23S rRNA in the presence of protein L20. The chain is Large ribosomal subunit protein bL21 from Shewanella pealeana (strain ATCC 700345 / ANG-SQ1).